A 152-amino-acid polypeptide reads, in one-letter code: Probable ribose-5-phosphate isomerase B (152 aa).

D-ribulose 5-phosphate is bound at residue aspartate 12–histidine 13. The active-site Proton acceptor is the cysteine 70. Residue glycine 71–glycine 75 coordinates D-ribulose 5-phosphate. The Proton donor role is filled by histidine 103. 4 residues coordinate D-ribulose 5-phosphate: aspartate 104, arginine 114, arginine 137, and arginine 141.

Belongs to the LacAB/RpiB family. As to quaternary structure, homodimer.

It carries out the reaction aldehydo-D-ribose 5-phosphate = D-ribulose 5-phosphate. It functions in the pathway carbohydrate degradation; pentose phosphate pathway; D-ribose 5-phosphate from D-ribulose 5-phosphate (non-oxidative stage): step 1/1. Its function is as follows. Catalyzes the interconversion of ribulose-5-P and ribose-5-P. This Mycoplasma pneumoniae (strain ATCC 29342 / M129 / Subtype 1) (Mycoplasmoides pneumoniae) protein is Probable ribose-5-phosphate isomerase B.